Reading from the N-terminus, the 307-residue chain is UDP-3-O-acyl-N-acetylglucosamine deacetylase (307 aa).

Zn(2+) is bound by residues His-78, His-241, and Asp-245. His-268 acts as the Proton donor in catalysis.

It belongs to the LpxC family. The cofactor is Zn(2+).

The catalysed reaction is a UDP-3-O-[(3R)-3-hydroxyacyl]-N-acetyl-alpha-D-glucosamine + H2O = a UDP-3-O-[(3R)-3-hydroxyacyl]-alpha-D-glucosamine + acetate. The protein operates within glycolipid biosynthesis; lipid IV(A) biosynthesis; lipid IV(A) from (3R)-3-hydroxytetradecanoyl-[acyl-carrier-protein] and UDP-N-acetyl-alpha-D-glucosamine: step 2/6. Functionally, catalyzes the hydrolysis of UDP-3-O-myristoyl-N-acetylglucosamine to form UDP-3-O-myristoylglucosamine and acetate, the committed step in lipid A biosynthesis. In Polaromonas naphthalenivorans (strain CJ2), this protein is UDP-3-O-acyl-N-acetylglucosamine deacetylase.